The following is a 326-amino-acid chain: Glyoxylate/hydroxypyruvate reductase B (326 aa).

Residues arginine 237 and glutamate 266 contribute to the active site. The Proton donor role is filled by histidine 285.

The protein belongs to the D-isomer specific 2-hydroxyacid dehydrogenase family. GhrB subfamily. Homodimer.

It localises to the cytoplasm. It carries out the reaction glycolate + NADP(+) = glyoxylate + NADPH + H(+). The catalysed reaction is (R)-glycerate + NAD(+) = 3-hydroxypyruvate + NADH + H(+). It catalyses the reaction (R)-glycerate + NADP(+) = 3-hydroxypyruvate + NADPH + H(+). Its function is as follows. Catalyzes the NADPH-dependent reduction of glyoxylate and hydroxypyruvate into glycolate and glycerate, respectively. The chain is Glyoxylate/hydroxypyruvate reductase B from Yersinia pseudotuberculosis serotype O:3 (strain YPIII).